Here is a 499-residue protein sequence, read N- to C-terminus: Centrosomal protein of 57 kDa (499 aa).

The span at 1-16 (MAAASVSAASDSQFSS) shows a compositional bias: low complexity. The interval 1 to 41 (MAAASVSAASDSQFSSVLAEPSRSNGNMVHHSSSPYVLYPP) is disordered. Positions 22-35 (SRSNGNMVHHSSSP) are enriched in polar residues. Ser53 is modified (phosphoserine). The segment at 58–239 (TFAYPESNSR…RAAELQSGIE (182 aa)) is centrosome localization domain (CLD). The stretch at 63-242 (ESNSRAIFSA…ELQSGIEANR (180 aa)) forms a coiled coil. Disordered stretches follow at residues 255 to 275 (TSTR…GFRN) and 424 to 476 (LEKQ…SRKN). Residues 278–490 (GAQPHYRLCL…KDMQTLQNSL (213 aa)) form a mediates interaction with microtubules region. Residues 388–491 (PSEELKDNLE…DMQTLQNSLQ (104 aa)) are a coiled coil. A compositionally biased stretch (basic and acidic residues) spans 427–443 (QSTDKQKELKGNKKTLD). A compositionally biased stretch (low complexity) spans 448 to 458 (SSSRSSVITRT). Residues 460 to 474 (SKKDFTKQRPGEKSR) are compositionally biased toward basic and acidic residues.

It belongs to the translokin family. Homodimer and homooligomer. Interacts with FGF2 and RAP80. Does not interact with FGF1 or FGF2 isoform 24 kDa. Interacts with microtubules. As to expression, ubiquitous (at protein level).

The protein resides in the nucleus. Its subcellular location is the cytoplasm. It is found in the cytoskeleton. It localises to the microtubule organizing center. The protein localises to the centrosome. Centrosomal protein which may be required for microtubule attachment to centrosomes. May act by forming ring-like structures around microtubules. Mediates nuclear translocation and mitogenic activity of the internalized growth factor FGF2. The chain is Centrosomal protein of 57 kDa (Cep57) from Rattus norvegicus (Rat).